We begin with the raw amino-acid sequence, 436 residues long: 3-phosphoshikimate 1-carboxyvinyltransferase (436 aa).

3-phosphoshikimate contacts are provided by lysine 23, serine 24, and arginine 28. Lysine 23 lines the phosphoenolpyruvate pocket. Positions 97 and 126 each coordinate phosphoenolpyruvate. 3-phosphoshikimate-binding residues include serine 171, glutamine 173, aspartate 323, and lysine 350. Residue glutamine 173 participates in phosphoenolpyruvate binding. Aspartate 323 (proton acceptor) is an active-site residue. The phosphoenolpyruvate site is built by arginine 354 and arginine 396.

Belongs to the EPSP synthase family. Monomer.

It localises to the cytoplasm. It carries out the reaction 3-phosphoshikimate + phosphoenolpyruvate = 5-O-(1-carboxyvinyl)-3-phosphoshikimate + phosphate. The protein operates within metabolic intermediate biosynthesis; chorismate biosynthesis; chorismate from D-erythrose 4-phosphate and phosphoenolpyruvate: step 6/7. Functionally, catalyzes the transfer of the enolpyruvyl moiety of phosphoenolpyruvate (PEP) to the 5-hydroxyl of shikimate-3-phosphate (S3P) to produce enolpyruvyl shikimate-3-phosphate and inorganic phosphate. The sequence is that of 3-phosphoshikimate 1-carboxyvinyltransferase from Prochlorococcus marinus (strain AS9601).